The chain runs to 523 residues: Protein disulfide-isomerase (523 aa).

The N-terminal stretch at 1 to 22 (MPGVRSLLLALAGVSLAPAVLA) is a signal peptide. One can recognise a Thioredoxin 1 domain in the interval 24 to 137 (DASTDSSDVH…TSYMIKQSLP (114 aa)). Catalysis depends on nucleophile residues Cys59 and Cys62. A disulfide bridge connects residues Cys59 and Cys62. An N-linked (GlcNAc...) asparagine glycan is attached at Asn170. The Thioredoxin 2 domain occupies 344–475 (VIAGDIAPSV…LANFVRDNGK (132 aa)). Cys394 and Cys397 are joined by a disulfide. Basic and acidic residues-rich tracts occupy residues 478-502 (VDAYDEKKVEKDGSDVTGKPKDAEA) and 512-523 (SEEKADKEHEEL). Residues 478-523 (VDAYDEKKVEKDGSDVTGKPKDAEAPPKPSDAPESEEKADKEHEEL) are disordered. A Prevents secretion from ER motif is present at residues 520–523 (HEEL).

Belongs to the protein disulfide isomerase family.

The protein resides in the endoplasmic reticulum lumen. The catalysed reaction is Catalyzes the rearrangement of -S-S- bonds in proteins.. In terms of biological role, participates in the folding of proteins containing disulfide bonds, may be involved in glycosylation, prolyl hydroxylation and triglyceride transfer. This chain is Protein disulfide-isomerase, found in Arthroderma benhamiae (strain ATCC MYA-4681 / CBS 112371) (Trichophyton mentagrophytes).